The sequence spans 431 residues: uncharacterized protein (431 aa).

11 helical membrane-spanning segments follow: residues 33–53, 63–83, 111–131, 143–163, 197–217, 241–261, 273–293, 318–338, 358–378, 383–403, and 407–427; these read VARV…VIYL, FSVF…ANGL, VSGM…PLWS, VALL…LGML, LVGF…MLMT, AHSI…PVLL, GVVI…LTAM, LIGG…PWIM, AAAV…AAAL, SLGW…PLSL, and TVVA…VALA.

To M.tuberculosis Rv1510 and Rv3630.

Its subcellular location is the cell membrane. This is an uncharacterized protein from Mycobacterium bovis (strain ATCC BAA-935 / AF2122/97).